The primary structure comprises 655 residues: tRNA 5-methylaminomethyl-2-thiouridine biosynthesis bifunctional protein MnmC (655 aa).

A tRNA (mnm(5)s(2)U34)-methyltransferase region spans residues 1-236 (MTDPLVPAVL…KRAMLVGRFA (236 aa)). The tract at residues 260–655 (IGTGLAGCAA…LRALRQGTAS (396 aa)) is FAD-dependent cmnm(5)s(2)U34 oxidoreductase.

This sequence in the N-terminal section; belongs to the methyltransferase superfamily. tRNA (mnm(5)s(2)U34)-methyltransferase family. In the C-terminal section; belongs to the DAO family. FAD is required as a cofactor.

Its subcellular location is the cytoplasm. The catalysed reaction is 5-aminomethyl-2-thiouridine(34) in tRNA + S-adenosyl-L-methionine = 5-methylaminomethyl-2-thiouridine(34) in tRNA + S-adenosyl-L-homocysteine + H(+). Functionally, catalyzes the last two steps in the biosynthesis of 5-methylaminomethyl-2-thiouridine (mnm(5)s(2)U) at the wobble position (U34) in tRNA. Catalyzes the FAD-dependent demodification of cmnm(5)s(2)U34 to nm(5)s(2)U34, followed by the transfer of a methyl group from S-adenosyl-L-methionine to nm(5)s(2)U34, to form mnm(5)s(2)U34. This chain is tRNA 5-methylaminomethyl-2-thiouridine biosynthesis bifunctional protein MnmC, found in Paraburkholderia phymatum (strain DSM 17167 / CIP 108236 / LMG 21445 / STM815) (Burkholderia phymatum).